The primary structure comprises 104 residues: UPF0235 protein Paes_1868 (104 aa).

The protein belongs to the UPF0235 family.

The protein is UPF0235 protein Paes_1868 of Prosthecochloris aestuarii (strain DSM 271 / SK 413).